A 212-amino-acid polypeptide reads, in one-letter code: Metalloproteinase inhibitor 3 (212 aa).

The N-terminal stretch at 1 to 24 (MTAWLGFLAVFLCSWSLRDLVAEA) is a signal peptide. Residue C25 coordinates Zn(2+). Involved in metalloproteinase-binding stretches follow at residues 25–28 (CTCV) and 89–90 (ES). 6 disulfide bridges follow: C25-C92, C27-C119, C37-C144, C146-C193, C151-C156, and C164-C185. The region spanning 25 to 144 (CTCVPIHPQD…GLNHRYHLGC (120 aa)) is the NTR domain.

The protein belongs to the protease inhibitor I35 (TIMP) family.

The protein resides in the secreted. It localises to the extracellular space. It is found in the extracellular matrix. In terms of biological role, complexes with metalloproteinases (such as collagenases) and irreversibly inactivates them by binding to their catalytic zinc cofactor. May form part of a tissue-specific acute response to remodeling stimuli. This chain is Metalloproteinase inhibitor 3 (TIMP3), found in Gallus gallus (Chicken).